A 124-amino-acid chain; its full sequence is MSYINKPGKTSAWRVMTVRQQVSAVLAYGKIETTLKKAKNTQKRLDKLITLAKVDNFNNRRQVKKWLLNTNLFDVDQLMDHLFSKVAPKYEKTPGGYSRVLKLGPRRGDATEMAILQLTDAKYK.

The protein belongs to the bacterial ribosomal protein bL17 family. In terms of assembly, part of the 50S ribosomal subunit. Contacts protein L32.

This is Large ribosomal subunit protein bL17 from Mycoplasma pneumoniae (strain ATCC 29342 / M129 / Subtype 1) (Mycoplasmoides pneumoniae).